Here is a 521-residue protein sequence, read N- to C-terminus: Probable feruloyl esterase B-2 (521 aa).

A signal peptide spans 1–19; sequence MKVSLWLTLLGVNLSLALA. N-linked (GlcNAc...) asparagine glycosylation is found at Asn13, Asn53, Asn85, Asn98, and Asn138. 2 disulfide bridges follow: Cys28-Cys75 and Cys63-Cys114. Cystine bridges form between Cys187–Cys440, Cys257–Cys274, Cys283–Cys291, and Cys506–Cys520. Ser188 (acyl-ester intermediate) is an active-site residue. Asn235 carries an N-linked (GlcNAc...) asparagine glycan. The Ca(2+) site is built by Asp258, Asp261, Val263, Asp265, and Ile267. Asp399 serves as the catalytic Charge relay system. Asn419 carries an N-linked (GlcNAc...) asparagine glycan. His439 acts as the Charge relay system in catalysis.

Belongs to the tannase family.

The protein resides in the secreted. The enzyme catalyses feruloyl-polysaccharide + H2O = ferulate + polysaccharide.. Functionally, involved in degradation of plant cell walls. Hydrolyzes the feruloyl-arabinose ester bond in arabinoxylans as well as the feruloyl-galactose and feruloyl-arabinose ester bonds in pectin. The chain is Probable feruloyl esterase B-2 (faeB-2) from Aspergillus flavus (strain ATCC 200026 / FGSC A1120 / IAM 13836 / NRRL 3357 / JCM 12722 / SRRC 167).